A 147-amino-acid chain; its full sequence is NADH-quinone oxidoreductase subunit A (147 aa).

The next 3 membrane-spanning stretches (helical) occupy residues Phe-16–Phe-36, Phe-68–Trp-88, and Val-98–Val-118.

The protein belongs to the complex I subunit 3 family. In terms of assembly, NDH-1 is composed of 13 different subunits. Subunits NuoA, H, J, K, L, M, N constitute the membrane sector of the complex.

Its subcellular location is the cell inner membrane. It catalyses the reaction a quinone + NADH + 5 H(+)(in) = a quinol + NAD(+) + 4 H(+)(out). Functionally, NDH-1 shuttles electrons from NADH, via FMN and iron-sulfur (Fe-S) centers, to quinones in the respiratory chain. The immediate electron acceptor for the enzyme in this species is believed to be ubiquinone. Couples the redox reaction to proton translocation (for every two electrons transferred, four hydrogen ions are translocated across the cytoplasmic membrane), and thus conserves the redox energy in a proton gradient. The sequence is that of NADH-quinone oxidoreductase subunit A from Shigella boydii serotype 18 (strain CDC 3083-94 / BS512).